Consider the following 739-residue polypeptide: Mitochondrial proton/calcium exchanger protein (739 aa).

The transit peptide at 1 to 115 (MASILLRSCR…RGWHSSRPVR (115 aa)) directs the protein to the mitochondrion. Positions 115 to 136 (RDDSVVEKSLKSLKDKNKKLEE) form a coiled coil. Residues 116–208 (DDSVVEKSLK…FLRICADLFR (93 aa)) are Mitochondrial intermembrane-facing. Residue threonine 192 is modified to Phosphothreonine; by PINK1. A helical membrane pass occupies residues 209 to 229 (LVPFLVFVVVPFMEFLLPVAV). The Mitochondrial matrix segment spans residues 230-739 (KLFPNMLPST…AEKEVAEVKS (510 aa)). Residues 252–537 (KELRVKLELA…TAPVLEGLKE (286 aa)) enclose the Letm1 RBD domain. Coiled-coil stretches lie at residues 462–490 (NKAK…KRSE) and 537–627 (EEEI…SQLE). Lysine 597 carries the post-translational modification N6-acetyllysine. The region spanning 663–698 (IPESKLTSLAAALDENKDGKVNIDDLVKVIELVDKE) is the EF-hand domain. 5 residues coordinate Ca(2+): aspartate 676, asparagine 678, aspartate 680, lysine 682, and aspartate 687. Residues 708-739 (AEIVATLEKEEKVEEKEKAKEKAEKEVAEVKS) adopt a coiled-coil conformation. The interval 718–739 (EKVEEKEKAKEKAEKEVAEVKS) is disordered.

It belongs to the LETM1 family. Homohexamer. Can form 2 complexes: a major (300 kDa) and a minor complex (500-600 kDa). Interacts with BCS1L. Interacts with GHITM. In terms of processing, PINK1-mediated phosphorylation at Thr-192, positively regulates its mitochondrial calcium transport activity.

It localises to the mitochondrion inner membrane. The enzyme catalyses Ca(2+)(in) + 2 H(+)(out) = Ca(2+)(out) + 2 H(+)(in). It carries out the reaction K(+)(in) + H(+)(out) = K(+)(out) + H(+)(in). Its activity is regulated as follows. Inhibited by ruthenium red or its derivative Ru360. Plays an important role in maintenance of mitochondrial morphology and in mediating either calcium or potassium/proton antiport. Mediates proton-dependent calcium efflux from mitochondrion. Also functions as an electroneutral mitochondrial proton/potassium exchanger. Crucial for the maintenance of mitochondrial tubular networks and for the assembly of the supercomplexes of the respiratory chain. Required for the maintenance of the tubular shape and cristae organization. The protein is Mitochondrial proton/calcium exchanger protein of Homo sapiens (Human).